Reading from the N-terminus, the 420-residue chain is Glucose-1-phosphate adenylyltransferase (420 aa).

Alpha-D-glucose 1-phosphate contacts are provided by residues Y107, G173, 188 to 189, and S206; that span reads EK.

Belongs to the bacterial/plant glucose-1-phosphate adenylyltransferase family. In terms of assembly, homotetramer.

It catalyses the reaction alpha-D-glucose 1-phosphate + ATP + H(+) = ADP-alpha-D-glucose + diphosphate. The protein operates within glycan biosynthesis; glycogen biosynthesis. Functionally, involved in the biosynthesis of ADP-glucose, a building block required for the elongation reactions to produce glycogen. Catalyzes the reaction between ATP and alpha-D-glucose 1-phosphate (G1P) to produce pyrophosphate and ADP-Glc. This is Glucose-1-phosphate adenylyltransferase from Shewanella baltica (strain OS185).